A 1496-amino-acid chain; its full sequence is Synaptojanin-2 (1496 aa).

In terms of domain architecture, SAC spans Leu-120–Gly-444. The region spanning Asp-889 to Lys-968 is the RRM domain. 4 disordered regions span residues Asn-1027–Asp-1073, Gly-1085–Lys-1166, Ala-1190–Ala-1405, and Asn-1427–Gly-1473. Over residues Arg-1101–Thr-1115 the composition is skewed to pro residues. Residues Ser-1124 and Ser-1191 each carry the phosphoserine modification. Residues Ser-1124 to Gln-1140 show a composition bias toward polar residues. Composition is skewed to pro residues over residues Pro-1221 to Val-1235 and Val-1319 to Val-1332. Positions Ala-1340–Leu-1359 are enriched in low complexity. Composition is skewed to polar residues over residues Phe-1383–Ser-1394 and Asn-1427–Arg-1442.

This sequence belongs to the synaptojanin family. In the central section; belongs to the inositol 1,4,5-trisphosphate 5-phosphatase family. Binds to GRB2. Isoform 2A binds to SYNJ2BP/OMP25. Isoform 2B2 C-terminal proline-rich region binds to a variety of SH3 domain-containing proteins including SH3GL1, SH3GL2, SH3GL3 and GRB2.

The protein localises to the cytoplasm. The protein resides in the cell membrane. It is found in the membrane raft. It localises to the presynapse. Its subcellular location is the cytoskeleton. It catalyses the reaction a 1,2-diacyl-sn-glycero-3-phospho-(1D-myo-inositol-4,5-bisphosphate) + H2O = a 1,2-diacyl-sn-glycero-3-phospho-(1D-myo-inositol 4-phosphate) + phosphate. Its function is as follows. Inositol 5-phosphatase which may be involved in distinct membrane trafficking and signal transduction pathways. May mediate the inhibitory effect of Rac1 on endocytosis. This chain is Synaptojanin-2 (SYNJ2), found in Homo sapiens (Human).